Consider the following 234-residue polypeptide: Ubiquinone biosynthesis O-methyltransferase (234 aa).

4 residues coordinate S-adenosyl-L-methionine: arginine 36, glycine 56, aspartate 77, and methionine 125.

It belongs to the methyltransferase superfamily. UbiG/COQ3 family.

The enzyme catalyses a 3-demethylubiquinol + S-adenosyl-L-methionine = a ubiquinol + S-adenosyl-L-homocysteine + H(+). It catalyses the reaction a 3-(all-trans-polyprenyl)benzene-1,2-diol + S-adenosyl-L-methionine = a 2-methoxy-6-(all-trans-polyprenyl)phenol + S-adenosyl-L-homocysteine + H(+). It participates in cofactor biosynthesis; ubiquinone biosynthesis. Functionally, O-methyltransferase that catalyzes the 2 O-methylation steps in the ubiquinone biosynthetic pathway. The polypeptide is Ubiquinone biosynthesis O-methyltransferase (Actinobacillus pleuropneumoniae serotype 5b (strain L20)).